Reading from the N-terminus, the 466-residue chain is Cysteine--tRNA ligase (466 aa).

Residue Cys-28 coordinates Zn(2+). Residues 30–40 (PTVYNYIHIGN) carry the 'HIGH' region motif. 3 residues coordinate Zn(2+): Cys-208, His-233, and Glu-237. The 'KMSKS' region signature appears at 265 to 269 (KMSKS). Lys-268 is a binding site for ATP.

It belongs to the class-I aminoacyl-tRNA synthetase family. As to quaternary structure, monomer. It depends on Zn(2+) as a cofactor.

The protein localises to the cytoplasm. It carries out the reaction tRNA(Cys) + L-cysteine + ATP = L-cysteinyl-tRNA(Cys) + AMP + diphosphate. In Staphylococcus aureus (strain MRSA252), this protein is Cysteine--tRNA ligase.